Consider the following 188-residue polypeptide: ATP synthase subunit p18, mitochondrial (188 aa).

The N-terminal 18 residues, 1–18 (MMRRVYSPVFCSVAAARF), are a transit peptide targeting the mitochondrion. 3 PPR repeats span residues 36–70 (TNTA…PPDI), 75–109 (ATLQ…EMQH), and 116–146 (NEES…METE).

In terms of assembly, F-type ATPases have 2 components, F(1) - the catalytic core - and F(o) - the membrane proton channel. F(1) has five subunits: alpha(3), beta(3), gamma(1), delta(1), epsilon(1), plus the additional subunit P18 (Tb427.05.1710) that is not present in F(1)F(o) ATP synthase from metazoa. Subunit P18 (Tb927.5.1710) interacts with the alpha subunit with a 1:1 stoichiometry; the interaction is direct. Subunit gamma is part of the central stalk. F(o) has three main subunits: a, b and c. The trypanosomal ATPase complex contains additional subunits that are not present in the F(1)F(o) ATP synthase from metazoa.

The protein localises to the mitochondrion. It is found in the mitochondrion inner membrane. Its function is as follows. Mitochondrial membrane ATP synthase (F(1)F(o) ATP synthase) produces ATP from ADP in the presence of a proton gradient across the membrane which is generated by electron transport complexes of the respiratory chain. F-type ATPases consist of two structural domains, F(1) - containing the extramembraneous catalytic core, and F(o) - containing the membrane proton channel, linked together by a central stalk and a peripheral stalk. During catalysis, ATP synthesis in the catalytic domain of F(1) is coupled via a rotary mechanism of the central stalk subunits to proton translocation. Subunits alpha and beta form the catalytic core in F(1). Rotation of the central stalk against the surrounding alpha(3)beta(3) subunits leads to hydrolysis of ATP in three separate catalytic sites on the beta subunits. Contrary to the procyclic, insect form that requires F(1)F(o) ATP synthase for ATP synthesis, the bloodstream form relies on ATP hydrolysis by F(1)F(o) ATP synthase to maintain its mitochondrial membrane potential. This is ATP synthase subunit p18, mitochondrial from Trypanosoma brucei brucei.